An 819-amino-acid polypeptide reads, in one-letter code: Endonuclease MutS2 (819 aa).

Position 339–346 (Gly-339–Thr-346) interacts with ATP. The Smr domain occupies Val-744–Ala-819.

Belongs to the DNA mismatch repair MutS family. MutS2 subfamily. Homodimer. Binds to stalled ribosomes, contacting rRNA.

Functionally, endonuclease that is involved in the suppression of homologous recombination and thus may have a key role in the control of bacterial genetic diversity. In terms of biological role, acts as a ribosome collision sensor, splitting the ribosome into its 2 subunits. Detects stalled/collided 70S ribosomes which it binds and splits by an ATP-hydrolysis driven conformational change. Acts upstream of the ribosome quality control system (RQC), a ribosome-associated complex that mediates the extraction of incompletely synthesized nascent chains from stalled ribosomes and their subsequent degradation. Probably generates substrates for RQC. The chain is Endonuclease MutS2 from Gemmatimonas aurantiaca (strain DSM 14586 / JCM 11422 / NBRC 100505 / T-27).